A 233-amino-acid polypeptide reads, in one-letter code: Large ribosomal subunit protein uL1 (233 aa).

This sequence belongs to the universal ribosomal protein uL1 family. As to quaternary structure, part of the 50S ribosomal subunit.

Its function is as follows. Binds directly to 23S rRNA. The L1 stalk is quite mobile in the ribosome, and is involved in E site tRNA release. Functionally, protein L1 is also a translational repressor protein, it controls the translation of the L11 operon by binding to its mRNA. This chain is Large ribosomal subunit protein uL1, found in Vibrio campbellii (strain ATCC BAA-1116).